We begin with the raw amino-acid sequence, 706 residues long: Translation initiation factor IF-2 (706 aa).

The tract at residues 55–117 (KEVNSDSNQE…PTMKDEKGLI (63 aa)) is disordered. Positions 67-81 (VNTDDKLDKIDKPNK) are enriched in basic and acidic residues. Positions 93–108 (KNKKSKKKQKNKKKGP) are enriched in basic residues. The region spanning 208–375 (SRPPVVTVMG…MILLVSEVEE (168 aa)) is the tr-type G domain. The tract at residues 217–224 (GHVDHGKT) is G1. 217 to 224 (GHVDHGKT) provides a ligand contact to GTP. The tract at residues 242 to 246 (GITQH) is G2. Residues 263-266 (DTPG) form a G3 region. GTP contacts are provided by residues 263-267 (DTPGH) and 317-320 (NKID). The interval 317 to 320 (NKID) is G4. The tract at residues 353-355 (SAI) is G5.

Belongs to the TRAFAC class translation factor GTPase superfamily. Classic translation factor GTPase family. IF-2 subfamily.

It localises to the cytoplasm. Functionally, one of the essential components for the initiation of protein synthesis. Protects formylmethionyl-tRNA from spontaneous hydrolysis and promotes its binding to the 30S ribosomal subunits. Also involved in the hydrolysis of GTP during the formation of the 70S ribosomal complex. The protein is Translation initiation factor IF-2 of Alkaliphilus metalliredigens (strain QYMF).